A 498-amino-acid polypeptide reads, in one-letter code: Diacylglycerol O-acyltransferase 1A (498 aa).

The interval 1 to 67 (MAISDEPETV…ANSQPQQKQD (67 aa)) is disordered. Helical transmembrane passes span 102–122 (HAGLFNLCIVVLVAVNSRLII), 146–166 (WPLFMCCLSLVVFPFAAFIVE), 178–198 (VVVVLHIIITSASLFYPVLVI), 203–223 (SAFLSGVTLMLFACVVWLKLV), 253–273 (YPYNVSFKSLAYFLVAPTLCY), 295–315 (LIIFTGVMGFIIEQYINPIVQ), and 342–362 (VWLCMFYCFFHLWLNILAELL). The short motif at 369 to 375 (FYQDWWN) is the FYXDWWN motif element. The next 3 membrane-spanning stretches (helical) occupy residues 410 to 430 (AVALLIAFLVSALFHELCIAV), 432 to 452 (CHIFKLWAFGGIMFQVPLVFI), and 465 to 485 (VGNMIFWFIFSILGQPMCVLL). H424 is a catalytic residue.

The protein belongs to the membrane-bound acyltransferase family. Sterol o-acyltransferase subfamily. As to expression, highly expressed in flowers and pods. Expressed at low levels in roots, stems and leaves.

It localises to the endoplasmic reticulum membrane. It catalyses the reaction an acyl-CoA + a 1,2-diacyl-sn-glycerol = a triacyl-sn-glycerol + CoA. The protein operates within glycerolipid metabolism; triacylglycerol biosynthesis. Functionally, major contributor to triacylglycerol (TAG) synthesis and oil accumulation in developing seeds. Catalyzes the acylation of the sn-3 hydroxy group of sn-1,2-diacylglycerol using acyl-CoA. Has a marked preference for oleoyl-CoA (18:1) and sn-1,2-dioleoylglycerol over vernoloyl-CoA and sn-1,2-divernoloylglycerol. Can use oleoyl-CoA, linoleoyl-CoA and linolenoyl-CoA as substrates. This Glycine max (Soybean) protein is Diacylglycerol O-acyltransferase 1A.